Reading from the N-terminus, the 180-residue chain is NAD(P)H-quinone oxidoreductase subunit I, chloroplastic (180 aa).

2 consecutive 4Fe-4S ferredoxin-type domains span residues 55–84 and 95–124; these read GRIH…VDWK and LNYS…MTEE. Positions 64, 67, 70, 74, 104, 107, 110, and 114 each coordinate [4Fe-4S] cluster.

This sequence belongs to the complex I 23 kDa subunit family. NDH is composed of at least 16 different subunits, 5 of which are encoded in the nucleus. It depends on [4Fe-4S] cluster as a cofactor.

Its subcellular location is the plastid. The protein resides in the chloroplast thylakoid membrane. It carries out the reaction a plastoquinone + NADH + (n+1) H(+)(in) = a plastoquinol + NAD(+) + n H(+)(out). The enzyme catalyses a plastoquinone + NADPH + (n+1) H(+)(in) = a plastoquinol + NADP(+) + n H(+)(out). NDH shuttles electrons from NAD(P)H:plastoquinone, via FMN and iron-sulfur (Fe-S) centers, to quinones in the photosynthetic chain and possibly in a chloroplast respiratory chain. The immediate electron acceptor for the enzyme in this species is believed to be plastoquinone. Couples the redox reaction to proton translocation, and thus conserves the redox energy in a proton gradient. The sequence is that of NAD(P)H-quinone oxidoreductase subunit I, chloroplastic from Sorghum bicolor (Sorghum).